The sequence spans 96 residues: MKNATSLIIYCFLMFLLMNNVKGQGKKKPPCPLGLSANGKCGHDGPKLCFSEMERKFNKDVVKTITHCKCWDDRRNNVDKHRCTCYLKHGFPCTNG.

A signal peptide spans 1–23 (MKNATSLIIYCFLMFLLMNNVKG). 4 disulfide bridges follow: Cys31/Cys93, Cys41/Cys70, Cys49/Cys83, and Cys68/Cys85.

This sequence belongs to the DEFL family.

It localises to the secreted. The chain is Putative defensin-like protein 236 (SCRL20) from Arabidopsis thaliana (Mouse-ear cress).